The following is a 793-amino-acid chain: Outer membrane protein assembly factor BamA (793 aa).

The N-terminal stretch at 1–19 (MKKLLIASLLFGTTTTVFA) is a signal peptide. POTRA domains are found at residues 22–89 (FVAK…VVAK), 90–170 (SIIS…INED), 173–259 (AKLA…VNEG), 262–341 (YDLR…VDAG), and 344–418 (LTVR…VKER).

The protein belongs to the BamA family. Part of the Bam complex.

The protein resides in the cell outer membrane. Part of the outer membrane protein assembly complex, which is involved in assembly and insertion of beta-barrel proteins into the outer membrane. The polypeptide is Outer membrane protein assembly factor BamA (Haemophilus influenzae).